A 145-amino-acid polypeptide reads, in one-letter code: Peptide methionine sulfoxide reductase MsrB (145 aa).

The MsrB domain occupies 6–129 (KNERLQQLTD…NSAALRFIPV (124 aa)). Cys118 functions as the Nucleophile in the catalytic mechanism.

The protein belongs to the MsrB Met sulfoxide reductase family.

It catalyses the reaction L-methionyl-[protein] + [thioredoxin]-disulfide + H2O = L-methionyl-(R)-S-oxide-[protein] + [thioredoxin]-dithiol. This Listeria monocytogenes serotype 4a (strain HCC23) protein is Peptide methionine sulfoxide reductase MsrB.